Consider the following 1431-residue polypeptide: MGDMKTPDFDDLLAAFDIPDIDAKEAIQSAPDEVEGHQGAGGASLIKSGDASVGESSALRSPSPSTDSQSDPSIVSVIVKNRVRPEPFDGGENSVPDPLNHNGFVSSGGSVHMSQSRGQPNGEQWPVCSSKAIPETAGQHGSSGGSKQGSNIFNKLKPLMAQGAGDSVGRARKMQLLQQQHMQQEMNLEGADKAKAPANPSGASGAASPFFPPPKPLLSTPSTASSSSPSSSSPSVGSRVSGAVASSPLATSLTEPFNGTPRLSSSAFRRADSEEEDSDPDSGGSLVIHESPDSPTPPKLSRRLRSSPENSQSPSIPPSTSISPNAYPKPGDVPSASPASPRAQQNWLSTAAQTGNGKSLPQEERNPEHVIEERDSPESPEPEMPKSSMPTSAVTKRSCSPAAASSPSAALREPKEEDEEMEVDKASTENGQDAENTDGGKGDTDKIEVDPAQSLEAETGSSTNSDGKAATGGKAPSRPLKVRIKTIKTSTGGITRTVTRVAGKGGAAANAGKDANKGQTGGRAGPVKGGKKNDTTAGQGVKCSTLPVSTLEASSAMLAAASKVQNKMTMQSDKTKVSATAVSITKATTLPVAPAVGGISVRPTVGKTTNGGTMPCKPASIVNSTGAVISRSQSSLVEAFNKILNSKNLLPSYRPDLSTPPPPEWGLPMPAAGYRCLECGDSFALERSLARHYDRRSLRIEVTCNHCAKRLAFFNKCSLLLHAREHKERGLVMQCSHLVMRPVTVEQMIGQQDTTPIGMLSPSLSSPPLTSSTTPAGTIPAPSTSSPLKDSPSPGTASTQPSPARRGPQSPQALMPLPCKKGEALQYHNFKCPECQAQFLSKAELVTHFQQIRATPNSTCTLCSPPMMLPNWCSVSAHQRIHKHRAPHVCPECGGTARQATFQTHLEESCLHFARRIGYRCSSCQVVFGGLNSIKSHIQTAHCEVFHKCPNCPMAFKSAQSAQGHITSQHPALTAAQAKMIYKCVMCDTVFTQKPLLYMHFDTHLAKQKVHVFKCPDCTKLYAQKGSMMEHIKTAHRGLSVKAETPPTTSSPVSAPAGNSTSKPKPATENNSDELSQGPGEEEEEGEDEEGEQEGEEREDEEEEENEEEEQVSSPESGNMEWRCKECKKRFPEREDYIDHMKNEHGTVGNEEISLQIVRAFIQFSQQSSSACPNNTRGRQESLPLPVSRTLLNCKSGLKINKGSWHCSEGKRTFSSRLILEKHIRVRHGIRSRQTTDRTNAPNTRKRSLPADGAGSSSELDNESGAPPAGGGTDTDDVPGEDTSGPAKRTRASENRPVEQEEEDGTFRCTPCGFTTQDWEEFQRHIPVHCDAENAPQQCLQCGACFASAGSLSRHKFITHRLRQGQHDRNASPGASPQYGSPSSPKAGEDGDGGVSCRVCGRRFDKASDLNTHFRTHGMAFITAHRTDKPL.

Disordered stretches follow at residues 24 to 481 (KEAI…RPLK) and 504 to 538 (KGGAAANAGKDANKGQTGGRAGPVKGGKKNDTTAG). The segment covering 61 to 73 (SPSPSTDSQSDPS) has biased composition (low complexity). A compositionally biased stretch (polar residues) spans 103–122 (GFVSSGGSVHMSQSRGQPNG). Composition is skewed to low complexity over residues 174–188 (MQLLQQQHMQQEMNL), 196–209 (APANPSGASGAASP), and 217–248 (LLSTPSTASSSSPSSSSPSVGSRVSGAVASSP). Residues 249 to 267 (LATSLTEPFNGTPRLSSSA) show a composition bias toward polar residues. The segment covering 311 to 324 (SQSPSIPPSTSISP) has biased composition (low complexity). A compositionally biased stretch (polar residues) spans 342 to 359 (RAQQNWLSTAAQTGNGKS). The segment covering 361–377 (PQEERNPEHVIEERDSP) has biased composition (basic and acidic residues). Residues 385 to 410 (PKSSMPTSAVTKRSCSPAAASSPSAA) show a composition bias toward low complexity. Over residues 438 to 449 (DGGKGDTDKIEV) the composition is skewed to basic and acidic residues. Gly residues predominate over residues 519 to 528 (QTGGRAGPVK). The C2H2-type 1; degenerate zinc finger occupies 674–692 (YRCLECGDSFALERSLARH). The segment at 754-816 (TTPIGMLSPS…GPQSPQALMP (63 aa)) is disordered. The span at 760–775 (LSPSLSSPPLTSSTTP) shows a compositional bias: low complexity. A compositionally biased stretch (polar residues) spans 781–802 (APSTSSPLKDSPSPGTASTQPS). The C2H2-type 2; degenerate zinc finger occupies 830–853 (FKCPECQAQFLSKAELVTHFQQIR). 4 consecutive C2H2-type zinc fingers follow at residues 919–942 (YRCSSCQVVFGGLNSIKSHIQTAH), 947–970 (HKCPNCPMAFKSAQSAQGHITSQH), 982–1004 (YKCVMCDTVFTQKPLLYMHFDTH), and 1013–1036 (FKCPDCTKLYAQKGSMMEHIKTAH). A disordered region spans residues 1041-1120 (VKAETPPTTS…QVSSPESGNM (80 aa)). A compositionally biased stretch (low complexity) spans 1043-1057 (AETPPTTSSPVSAPA). A compositionally biased stretch (polar residues) spans 1058-1075 (GNSTSKPKPATENNSDEL). A compositionally biased stretch (acidic residues) spans 1080-1111 (GEEEEEGEDEEGEQEGEEREDEEEEENEEEEQ). The C2H2-type 7 zinc finger occupies 1122–1145 (WRCKECKKRFPEREDYIDHMKNEH). The segment at 1205 to 1227 (WHCSEGKRTFSSRLILEKHIRVR) adopts a C2H2-type 8; degenerate zinc-finger fold. Residues 1225-1310 (RVRHGIRSRQ…EEEDGTFRCT (86 aa)) form a disordered region. 2 C2H2-type zinc fingers span residues 1307–1329 (FRCTPCGFTTQDWEEFQRHIPVH) and 1337–1360 (QQCLQCGACFASAGSLSRHKFITH). Positions 1362–1392 (LRQGQHDRNASPGASPQYGSPSSPKAGEDGD) are disordered. Over residues 1373–1384 (PGASPQYGSPSS) the composition is skewed to polar residues. Residues 1395–1425 (VSCRVCGRRFDKASDLNTHFRTHGMAFITAH) form a C2H2-type 11 zinc finger.

The protein belongs to the krueppel C2H2-type zinc-finger protein family. Widely expressed with highest levels in eye, spleen and ovary.

The protein resides in the nucleus. Functionally, may be involved in transcriptional regulation. The chain is Zinc finger protein 687b (znf687b) from Danio rerio (Zebrafish).